A 450-amino-acid polypeptide reads, in one-letter code: MGKENAVSRPFTRSLASALRASEVTSTTQNQQRVNTKRPALEDTRATGPNKRKKRAVLGEITNVNSNTAILEAKNSKQIKKGRGHGLASTSQLATSVTSEVTDLQSRTDAKVEVASNTAGNLSVSKGTDNTADNCIEIWNSRLPPRPLGRSASTAEKSAVIGSSTVPDIPKFVDIDSDDKDPLLCCLYAPEIHYNLRVSELKRRPLPDFMERIQKDVTQSMRGILVDWLVEVSEEYTLASDTLYLTVYLIDWFLHGNYVQRQQLQLLGITCMLIASKYEEISAPRIEEFCFITDNTYTRDQVLEMENQVLKHFSFQIYTPTPKTFLRRFLRAAQASRLSPSLEVEFLASYLTELTLIDYHFLKFLPSVVAASAVFLAKWTMDQSNHPWNPTLEHYTTYKASDLKASVHALQDLQLNTKGCPLSAIRMKYRQEKYKSVAVLTSPKLLDTLF.

Disordered regions lie at residues 18 to 53 (ALRA…NKRK) and 75 to 94 (NSKQ…SQLA). Residues 23–34 (EVTSTTQNQQRV) show a composition bias toward polar residues.

This sequence belongs to the cyclin family. Cyclin AB subfamily. In terms of assembly, interacts with CDKA-1. Interacts with SAMBA.

The protein localises to the nucleus. Negatively regulates endocycles and acts as a regulator of ploidy levels in endoreduplication. Promotes divisions in the guard cells (GCs) after the guard mother cells (GMC) symmetric division. This Arabidopsis thaliana (Mouse-ear cress) protein is Cyclin-A2-3 (CYCA2-3).